We begin with the raw amino-acid sequence, 807 residues long: Glycerol-3-phosphate acyltransferase (807 aa).

The short motif at Cys308 to Met313 is the HXXXXD motif element.

The protein belongs to the GPAT/DAPAT family.

The protein localises to the cell inner membrane. It carries out the reaction sn-glycerol 3-phosphate + an acyl-CoA = a 1-acyl-sn-glycero-3-phosphate + CoA. Its pathway is phospholipid metabolism; CDP-diacylglycerol biosynthesis; CDP-diacylglycerol from sn-glycerol 3-phosphate: step 1/3. This Shewanella halifaxensis (strain HAW-EB4) protein is Glycerol-3-phosphate acyltransferase.